The sequence spans 305 residues: Glycine--tRNA ligase alpha subunit (305 aa).

This sequence belongs to the class-II aminoacyl-tRNA synthetase family. As to quaternary structure, tetramer of two alpha and two beta subunits.

It localises to the cytoplasm. The enzyme catalyses tRNA(Gly) + glycine + ATP = glycyl-tRNA(Gly) + AMP + diphosphate. In Ligilactobacillus salivarius (strain UCC118) (Lactobacillus salivarius), this protein is Glycine--tRNA ligase alpha subunit.